A 429-amino-acid chain; its full sequence is Ribosomal RNA small subunit methyltransferase B (429 aa).

S-adenosyl-L-methionine is bound by residues 254 to 260 (CAAPGGK), aspartate 277, aspartate 303, and aspartate 322. Residue cysteine 375 is the Nucleophile of the active site.

It belongs to the class I-like SAM-binding methyltransferase superfamily. RsmB/NOP family.

The protein localises to the cytoplasm. It catalyses the reaction cytidine(967) in 16S rRNA + S-adenosyl-L-methionine = 5-methylcytidine(967) in 16S rRNA + S-adenosyl-L-homocysteine + H(+). In terms of biological role, specifically methylates the cytosine at position 967 (m5C967) of 16S rRNA. In Escherichia coli O157:H7, this protein is Ribosomal RNA small subunit methyltransferase B.